The sequence spans 160 residues: Na(+)/H(+) antiporter subunit E1 (160 aa).

4 helical membrane-spanning segments follow: residues 1–21, 27–47, 49–69, and 101–121; these read MAIQ…VTGS, FILG…VLPG, FYLI…IELI, and WQIV…VLGI.

It belongs to the CPA3 antiporters (TC 2.A.63) subunit E family. As to quaternary structure, may form a heterooligomeric complex that consists of seven subunits: mnhA1, mnhB1, mnhC1, mnhD1, mnhE1, mnhF1 and mnhG1.

It is found in the cell membrane. Mnh complex is a Na(+)/H(+) antiporter involved in Na(+) excretion. The chain is Na(+)/H(+) antiporter subunit E1 (mnhE1) from Staphylococcus saprophyticus subsp. saprophyticus (strain ATCC 15305 / DSM 20229 / NCIMB 8711 / NCTC 7292 / S-41).